The primary structure comprises 332 residues: D-lactate dehydrogenase (332 aa).

NAD(+) is bound by residues 155 to 156 (RI), Asp-175, 206 to 207 (VP), Asn-212, 233 to 235 (FAR), and Asp-259. The active site involves Arg-235. Residue Glu-264 is part of the active site. The active-site Proton donor is the His-296.

Belongs to the D-isomer specific 2-hydroxyacid dehydrogenase family.

The catalysed reaction is (R)-lactate + NAD(+) = pyruvate + NADH + H(+). The chain is D-lactate dehydrogenase (ldhD) from Lactiplantibacillus plantarum (strain ATCC BAA-793 / NCIMB 8826 / WCFS1) (Lactobacillus plantarum).